Reading from the N-terminus, the 92-residue chain is Small integral membrane protein 12 (92 aa).

Residues 12 to 34 (YAPYVTFPVAFVVGAVGYHLEWF) form a helical membrane-spanning segment.

The protein belongs to the SMIM12 family.

It is found in the membrane. This is Small integral membrane protein 12 (SMIM12) from Bos taurus (Bovine).